A 283-amino-acid chain; its full sequence is F-box only protein 27 (283 aa).

Residues 1–23 are disordered; sequence MGASVSRGRAARVPAPEPEPEEA. An F-box domain is found at 23 to 70; the sequence is ALDLSQLPPELLLVVLSHVPPRTLLGRCRQVCRGWRALVDGQALWLLI. The FBA domain occupies 104–280; it reads FCARRPIGRN…VTNSSVIVRV (177 aa).

As to quaternary structure, part of a SCF (SKP1-cullin-F-box) protein ligase complex. Interacts with SKP1 and CUL1. In terms of tissue distribution, predominantly expressed in brain, heart and kidney. Expressed at lower levels in liver and lung.

In terms of biological role, substrate-recognition component of the SCF (SKP1-CUL1-F-box protein)-type E3 ubiquitin ligase complex. Able to recognize and bind denatured glycoproteins, which are modified with complex-type oligosaccharides. This is F-box only protein 27 (FBXO27) from Homo sapiens (Human).